A 383-amino-acid polypeptide reads, in one-letter code: MNAAPVPILLTQRRYARVATPENPLVLESGQRLTDVTLCYEVFGRLNPAGDNAILVCHALTGDSHVAGRYRPDDPKPGWWDDAVGPGKALDTDRYCVICSNVLGGCQGSTGPSSVNPATGRPYGLDFPLVTVRDMVRAQARLLDLLGVRRLLAVIGGSLGAMQALEWAATYPDRMRGIIPIGGAGRFHPQGIAFNEVQRQAILNDPGFLGGQYYGTPGPVRGLATARMLGMITYRSDESMWTQFGRNPQGEANPLHQGFAVAYQVESYLHYQGRKLVERFDANSYLYLTRAMDLMDLGRGRGSYEEAHARIQARVLAVGIRSDLLFPTYLQRETVELVRASGGRAEYVEMDSPWGHDAFLLDFPLIEEPIRRFLQELEAEENA.

Residues 52–362 (NAILVCHALT…PWGHDAFLLD (311 aa)) enclose the AB hydrolase-1 domain. Ser158 functions as the Nucleophile in the catalytic mechanism. A substrate-binding site is contributed by Arg227. Residues Asp323 and His356 contribute to the active site. Asp357 provides a ligand contact to substrate.

The protein belongs to the AB hydrolase superfamily. MetX family. In terms of assembly, homodimer.

The protein localises to the cytoplasm. The catalysed reaction is L-homoserine + acetyl-CoA = O-acetyl-L-homoserine + CoA. The protein operates within amino-acid biosynthesis; L-methionine biosynthesis via de novo pathway; O-acetyl-L-homoserine from L-homoserine: step 1/1. Functionally, transfers an acetyl group from acetyl-CoA to L-homoserine, forming acetyl-L-homoserine. This chain is Homoserine O-acetyltransferase, found in Symbiobacterium thermophilum (strain DSM 24528 / JCM 14929 / IAM 14863 / T).